Here is a 181-residue protein sequence, read N- to C-terminus: UPF0232 protein SAV_4320 (181 aa).

A compositionally biased stretch (polar residues) spans Met-1–Glu-10. Disordered regions lie at residues Met-1 to Pro-64 and Gln-156 to Gly-181. Residues Ala-30 to Gly-39 show a composition bias toward basic and acidic residues.

The protein belongs to the UPF0232 family.

This Streptomyces avermitilis (strain ATCC 31267 / DSM 46492 / JCM 5070 / NBRC 14893 / NCIMB 12804 / NRRL 8165 / MA-4680) protein is UPF0232 protein SAV_4320.